A 469-amino-acid polypeptide reads, in one-letter code: Adenosylhomocysteinase (469 aa).

Substrate contacts are provided by Thr-63, Asp-139, and Glu-164. An NAD(+)-binding site is contributed by 165–167; sequence TTT. Residues Lys-194 and Asp-198 each contribute to the substrate site. NAD(+) contacts are provided by residues Asn-199, 228–233, Glu-251, Asn-300, 321–323, and Asn-375; these read GYGDVG and IGH.

Belongs to the adenosylhomocysteinase family. The cofactor is NAD(+).

It localises to the cytoplasm. It carries out the reaction S-adenosyl-L-homocysteine + H2O = L-homocysteine + adenosine. It participates in amino-acid biosynthesis; L-homocysteine biosynthesis; L-homocysteine from S-adenosyl-L-homocysteine: step 1/1. In terms of biological role, may play a key role in the regulation of the intracellular concentration of adenosylhomocysteine. This Pseudomonas fluorescens (strain ATCC BAA-477 / NRRL B-23932 / Pf-5) protein is Adenosylhomocysteinase.